The chain runs to 65 residues: Large ribosomal subunit protein uL29 (65 aa).

The protein belongs to the universal ribosomal protein uL29 family.

The polypeptide is Large ribosomal subunit protein uL29 (Hyphomonas neptunium (strain ATCC 15444)).